We begin with the raw amino-acid sequence, 389 residues long: 8-amino-7-oxononanoate synthase (389 aa).

Arg18 contacts substrate. Pyridoxal 5'-phosphate is bound at residue Gly104 to Tyr105. His129 contributes to the substrate binding site. Residues Ser176, His204, and Thr232 each coordinate pyridoxal 5'-phosphate. N6-(pyridoxal phosphate)lysine is present on Lys235. Thr351 lines the substrate pocket.

This sequence belongs to the class-II pyridoxal-phosphate-dependent aminotransferase family. BioF subfamily. In terms of assembly, homodimer. The cofactor is pyridoxal 5'-phosphate.

The catalysed reaction is 6-carboxyhexanoyl-[ACP] + L-alanine + H(+) = (8S)-8-amino-7-oxononanoate + holo-[ACP] + CO2. It participates in cofactor biosynthesis; biotin biosynthesis. Functionally, catalyzes the decarboxylative condensation of pimeloyl-[acyl-carrier protein] and L-alanine to produce 8-amino-7-oxononanoate (AON), [acyl-carrier protein], and carbon dioxide. This Citrifermentans bemidjiense (strain ATCC BAA-1014 / DSM 16622 / JCM 12645 / Bem) (Geobacter bemidjiensis) protein is 8-amino-7-oxononanoate synthase.